The following is a 423-amino-acid chain: MLLKNCRIIKDNKIIEGDILIDENGRIKKIAKDIKVDDEIIDIKNSLVIPGVIDAHVHFRWGEEKKEDFLSGSLAGINGGVCFAIDMPNNKPPITTKELFYKKLEDCKKDSKINVFLNFGVTENNYLGTVEDAKAYKIFMVKSVGDLFIEDYSKLKDILNQNKLFCIHAEHKDVINENLKKYQLNSWIDHCKIRDEKSEVEAVKEVIKNLKIIDRQSNKKPHVHFCHISTKEALYLIKKVRQELKNIKITVEVTPHHIYLNKDMAEELKGFGKFNPPLREKDDNIALIKGIVNKDVDIIASDHAPHLLEDKLKNVKNCPSGIPGIETIVPLTLNLVNKGLISLFDAIRVLSKNPAKIFNINNKIEEGNLANLTIIDLKKEGKINAELFKSKAKFSPFDGWEVKGFPIYTVINGTLYEAYGCKC.

Zn(2+)-binding residues include His-56 and His-58. Substrate contacts are provided by residues 58-60 and Asn-89; that span reads HFR. Zn(2+) contacts are provided by Lys-137, His-168, His-227, and Asp-302. Lys-137 carries the N6-carboxylysine modification. Asp-302 is an active-site residue. His-306 is a binding site for substrate.

This sequence belongs to the metallo-dependent hydrolases superfamily. DHOase family. Class I DHOase subfamily. It depends on Zn(2+) as a cofactor.

It carries out the reaction (S)-dihydroorotate + H2O = N-carbamoyl-L-aspartate + H(+). It functions in the pathway pyrimidine metabolism; UMP biosynthesis via de novo pathway; (S)-dihydroorotate from bicarbonate: step 3/3. Its function is as follows. Catalyzes the reversible cyclization of carbamoyl aspartate to dihydroorotate. The polypeptide is Dihydroorotase (Methanocaldococcus jannaschii (strain ATCC 43067 / DSM 2661 / JAL-1 / JCM 10045 / NBRC 100440) (Methanococcus jannaschii)).